A 1015-amino-acid chain; its full sequence is Translation initiation factor IF-2 (1015 aa).

Disordered stretches follow at residues 124–144 (EKEP…EKKV), 159–179 (EVTV…PKPV), 196–230 (KKEE…KEEE), and 250–386 (IDLA…VSEE). 2 stretches are compositionally biased toward basic and acidic residues: residues 196-217 (KKEE…EKPV) and 265-315 (SKEE…DPNG). The 171-residue stretch at 514 to 684 (HRAPIVTVMG…LLEAEMLDLK (171 aa)) folds into the tr-type G domain. Residues 523-530 (GHVDHGKT) are G1. 523–530 (GHVDHGKT) serves as a coordination point for GTP. A G2 region spans residues 548 to 552 (GITQH). The segment at 570–573 (DTPG) is G3. GTP contacts are provided by residues 570–574 (DTPGH) and 624–627 (NKID). The interval 624–627 (NKID) is G4. The interval 660-662 (SAK) is G5.

This sequence belongs to the TRAFAC class translation factor GTPase superfamily. Classic translation factor GTPase family. IF-2 subfamily.

The protein resides in the cytoplasm. Functionally, one of the essential components for the initiation of protein synthesis. Protects formylmethionyl-tRNA from spontaneous hydrolysis and promotes its binding to the 30S ribosomal subunits. Also involved in the hydrolysis of GTP during the formation of the 70S ribosomal complex. The protein is Translation initiation factor IF-2 of Bacteroides fragilis (strain ATCC 25285 / DSM 2151 / CCUG 4856 / JCM 11019 / LMG 10263 / NCTC 9343 / Onslow / VPI 2553 / EN-2).